The sequence spans 150 residues: Arginine repressor (150 aa).

It belongs to the ArgR family.

The protein resides in the cytoplasm. It participates in amino-acid biosynthesis; L-arginine biosynthesis [regulation]. Its function is as follows. Regulates arginine biosynthesis genes. This Ruminiclostridium cellulolyticum (strain ATCC 35319 / DSM 5812 / JCM 6584 / H10) (Clostridium cellulolyticum) protein is Arginine repressor.